Reading from the N-terminus, the 500-residue chain is Probable malate:quinone oxidoreductase (500 aa).

The protein belongs to the MQO family. FAD serves as cofactor.

It catalyses the reaction (S)-malate + a quinone = a quinol + oxaloacetate. It participates in carbohydrate metabolism; tricarboxylic acid cycle; oxaloacetate from (S)-malate (quinone route): step 1/1. In Bacillus anthracis (strain A0248), this protein is Probable malate:quinone oxidoreductase.